Here is a 403-residue protein sequence, read N- to C-terminus: Phosphoglycerate kinase (403 aa).

Substrate-binding positions include 21-23, R36, 59-62, R119, and R159; these read DFN and HLGR. ATP contacts are provided by residues K214, G301, E332, and 359 to 362; that span reads GGDS.

Belongs to the phosphoglycerate kinase family. Monomer.

Its subcellular location is the cytoplasm. It carries out the reaction (2R)-3-phosphoglycerate + ATP = (2R)-3-phospho-glyceroyl phosphate + ADP. It functions in the pathway carbohydrate degradation; glycolysis; pyruvate from D-glyceraldehyde 3-phosphate: step 2/5. The polypeptide is Phosphoglycerate kinase (Lactobacillus helveticus (strain DPC 4571)).